Reading from the N-terminus, the 86-residue chain is UPF0437 protein Ava_4254 (86 aa).

The protein belongs to the UPF0437 family.

This chain is UPF0437 protein Ava_4254, found in Trichormus variabilis (strain ATCC 29413 / PCC 7937) (Anabaena variabilis).